A 325-amino-acid chain; its full sequence is Tetraacyldisaccharide 4'-kinase (325 aa).

Threonine 55–threonine 62 contacts ATP.

Belongs to the LpxK family.

The enzyme catalyses a lipid A disaccharide + ATP = a lipid IVA + ADP + H(+). It functions in the pathway glycolipid biosynthesis; lipid IV(A) biosynthesis; lipid IV(A) from (3R)-3-hydroxytetradecanoyl-[acyl-carrier-protein] and UDP-N-acetyl-alpha-D-glucosamine: step 6/6. Functionally, transfers the gamma-phosphate of ATP to the 4'-position of a tetraacyldisaccharide 1-phosphate intermediate (termed DS-1-P) to form tetraacyldisaccharide 1,4'-bis-phosphate (lipid IVA). The polypeptide is Tetraacyldisaccharide 4'-kinase (Salmonella dublin (strain CT_02021853)).